The chain runs to 250 residues: Probable transcriptional regulatory protein Lferr_0060 (250 aa).

It belongs to the TACO1 family.

It is found in the cytoplasm. In Acidithiobacillus ferrooxidans (strain ATCC 53993 / BNL-5-31) (Leptospirillum ferrooxidans (ATCC 53993)), this protein is Probable transcriptional regulatory protein Lferr_0060.